The chain runs to 199 residues: Recombination protein RecR (199 aa).

A C4-type zinc finger spans residues 58–73; it reads CKKCFNLTSEEECDIC. The region spanning 81–175 is the Toprim domain; the sequence is NIICVVAETK…KVTRIAYGLP (95 aa).

The protein belongs to the RecR family.

Functionally, may play a role in DNA repair. It seems to be involved in an RecBC-independent recombinational process of DNA repair. It may act with RecF and RecO. The polypeptide is Recombination protein RecR (Prochlorococcus marinus (strain MIT 9515)).